The sequence spans 277 residues: Putative pyruvate, phosphate dikinase regulatory protein (277 aa).

151–158 lines the ADP pocket; sequence GISRTSKT.

The protein belongs to the pyruvate, phosphate/water dikinase regulatory protein family. PDRP subfamily.

The catalysed reaction is N(tele)-phospho-L-histidyl/L-threonyl-[pyruvate, phosphate dikinase] + ADP = N(tele)-phospho-L-histidyl/O-phospho-L-threonyl-[pyruvate, phosphate dikinase] + AMP + H(+). It catalyses the reaction N(tele)-phospho-L-histidyl/O-phospho-L-threonyl-[pyruvate, phosphate dikinase] + phosphate + H(+) = N(tele)-phospho-L-histidyl/L-threonyl-[pyruvate, phosphate dikinase] + diphosphate. Its function is as follows. Bifunctional serine/threonine kinase and phosphorylase involved in the regulation of the pyruvate, phosphate dikinase (PPDK) by catalyzing its phosphorylation/dephosphorylation. The polypeptide is Putative pyruvate, phosphate dikinase regulatory protein (Alkaliphilus oremlandii (strain OhILAs) (Clostridium oremlandii (strain OhILAs))).